Here is a 512-residue protein sequence, read N- to C-terminus: 2,3-bisphosphoglycerate-independent phosphoglycerate mutase (512 aa).

Residues Asp-12 and Ser-62 each coordinate Mn(2+). The active-site Phosphoserine intermediate is Ser-62. Residues His-123, 153–154, Arg-185, Arg-191, 260–263, and Lys-333 each bind substrate; these read RD and RPDR. Positions 400, 404, 441, 442, and 460 each coordinate Mn(2+).

This sequence belongs to the BPG-independent phosphoglycerate mutase family. As to quaternary structure, monomer. Requires Mn(2+) as cofactor.

It carries out the reaction (2R)-2-phosphoglycerate = (2R)-3-phosphoglycerate. The protein operates within carbohydrate degradation; glycolysis; pyruvate from D-glyceraldehyde 3-phosphate: step 3/5. Catalyzes the interconversion of 2-phosphoglycerate and 3-phosphoglycerate. The polypeptide is 2,3-bisphosphoglycerate-independent phosphoglycerate mutase (Clostridium perfringens (strain 13 / Type A)).